A 736-amino-acid polypeptide reads, in one-letter code: Phosphoribosylformylglycinamidine synthase subunit PurL (736 aa).

Residue His48 is part of the active site. Residues Tyr51 and Lys90 each coordinate ATP. Glu92 is a binding site for Mg(2+). Substrate-binding positions include Ser93–His96 and Arg115. His94 serves as the catalytic Proton acceptor. Asp116 provides a ligand contact to Mg(2+). Gln239 is a substrate binding site. Asp267 contacts Mg(2+). Glu311–Gln313 lines the substrate pocket. 2 residues coordinate ATP: Asp492 and Gly529. Asn530 is a Mg(2+) binding site. Substrate is bound at residue Ser532.

Belongs to the FGAMS family. In terms of assembly, monomer. Part of the FGAM synthase complex composed of 1 PurL, 1 PurQ and 2 PurS subunits.

It is found in the cytoplasm. The enzyme catalyses N(2)-formyl-N(1)-(5-phospho-beta-D-ribosyl)glycinamide + L-glutamine + ATP + H2O = 2-formamido-N(1)-(5-O-phospho-beta-D-ribosyl)acetamidine + L-glutamate + ADP + phosphate + H(+). Its pathway is purine metabolism; IMP biosynthesis via de novo pathway; 5-amino-1-(5-phospho-D-ribosyl)imidazole from N(2)-formyl-N(1)-(5-phospho-D-ribosyl)glycinamide: step 1/2. Functionally, part of the phosphoribosylformylglycinamidine synthase complex involved in the purines biosynthetic pathway. Catalyzes the ATP-dependent conversion of formylglycinamide ribonucleotide (FGAR) and glutamine to yield formylglycinamidine ribonucleotide (FGAM) and glutamate. The FGAM synthase complex is composed of three subunits. PurQ produces an ammonia molecule by converting glutamine to glutamate. PurL transfers the ammonia molecule to FGAR to form FGAM in an ATP-dependent manner. PurS interacts with PurQ and PurL and is thought to assist in the transfer of the ammonia molecule from PurQ to PurL. The chain is Phosphoribosylformylglycinamidine synthase subunit PurL from Bradyrhizobium diazoefficiens (strain JCM 10833 / BCRC 13528 / IAM 13628 / NBRC 14792 / USDA 110).